Reading from the N-terminus, the 222-residue chain is Putative RING finger protein ORF118 (222 aa).

The RING-type zinc-finger motif lies at 78-114 (CCICMAKNNRKEALPCQHNVCRDCYYKPMRNNCPVCN). The interval 184–222 (IENRIHNNNNNNYDENNPDDLPVIHPPRRRHRQTAHISI) is disordered. Residues 189-198 (HNNNNNNYDE) are compositionally biased toward low complexity. Residues 209–222 (PPRRRHRQTAHISI) show a composition bias toward basic residues.

The polypeptide is Putative RING finger protein ORF118 (Magallana gigas (Pacific oyster)).